An 80-amino-acid chain; its full sequence is MRKLLIQIIRLYQRFISPLTPPSCRFYPTCSAYGIEAIETHGAIKGSYLAIKRILKCHPFHPGGVDPVPECQHTKHKKTP.

Belongs to the UPF0161 family.

The protein resides in the cell membrane. Could be involved in insertion of integral membrane proteins into the membrane. In Shouchella clausii (strain KSM-K16) (Alkalihalobacillus clausii), this protein is Putative membrane protein insertion efficiency factor.